The chain runs to 117 residues: Ig heavy chain V region 5-76 (117 aa).

The N-terminal stretch at 1–19 (MNFVLSLIFLALILKGVQC) is a signal peptide. Residues 20-49 (EVHLVESGGGLVKPGGSLKLSCVVSGFTFN) form a framework-1 region. Cysteines 41 and 115 form a disulfide. Positions 50–54 (KYAMS) are complementarity-determining-1. Residues 55–68 (WVRQTPEKRLEWVA) are framework-2. A complementarity-determining-2 region spans residues 69–85 (TISSGGLYTYYPDSVKG). The tract at residues 86–117 (RFTISRDNAGNTLYLQMSSLRSEDTAMYYCAR) is framework-3.

This chain is Ig heavy chain V region 5-76, found in Mus musculus (Mouse).